Reading from the N-terminus, the 442-residue chain is Glutamyl-tRNA(Gln) amidotransferase subunit D (442 aa).

The segment at 63–84 (TQTDIGSSAGAGADTEADKTES) is disordered. The Asparaginase/glutaminase domain occupies 102–429 (PTVSLISTGG…PDPTNAMRKS (328 aa)). Residues T112, T188, D189, and K265 contribute to the active site.

Belongs to the asparaginase 1 family. GatD subfamily. In terms of assembly, heterodimer of GatD and GatE.

It catalyses the reaction L-glutamyl-tRNA(Gln) + L-glutamine + ATP + H2O = L-glutaminyl-tRNA(Gln) + L-glutamate + ADP + phosphate + H(+). Functionally, allows the formation of correctly charged Gln-tRNA(Gln) through the transamidation of misacylated Glu-tRNA(Gln) in organisms which lack glutaminyl-tRNA synthetase. The reaction takes place in the presence of glutamine and ATP through an activated gamma-phospho-Glu-tRNA(Gln). The GatDE system is specific for glutamate and does not act on aspartate. This is Glutamyl-tRNA(Gln) amidotransferase subunit D from Haloquadratum walsbyi (strain DSM 16790 / HBSQ001).